A 502-amino-acid chain; its full sequence is MKFSAYLWWLFLNLALVKGTSLLSNVTLAEDSFWEHFQAYTNTKHLNQEWITSEAVNNEGSKIYGAQWRLSQGRLQGSAWDKGIAVRTGNAAAMIGHLLETPINVSETDTLVVQYEIKLDNSLTCGGAFIKLMSGFMNVEALKHYAPDTEGVELVFGPDYCAPEINGVQFAINKVDKITHESKLRYLQEMPLSKLTDTSQSHLYTLIIDESAQSFQILIDGKTVMVREHIEDKKKVNFEPPITPPLMIPDVSVAKPHDWDDRIRIPDPEAVKLSDRDERDPLMIPHPDGTEPPEWNSSIPEYILDPNAQKPSWWKELEHGEWIPPMIKNPLCTAERGCGQQIPGLINNAKYKGPGELNEIINPNYMGEWHPPEIENPLYYEEQHPLRIENVISGVILEFWSGSPNMLISNIYVGKNVTEAQIIGNKTWLMRDRAFRGSDGPTERKFMNSRLGNLQTTFHNERESPNPFDRIIDRILEQPLKFVLTAAVVLLTTSVLCCVVFT.

The first 19 residues, 1–19 (MKFSAYLWWLFLNLALVKG), serve as a signal peptide directing secretion. At 20–481 (TSLLSNVTLA…IDRILEQPLK (462 aa)) the chain is on the lumenal side. Asn-25 and Asn-104 each carry an N-linked (GlcNAc...) asparagine glycan. An intrachain disulfide couples Cys-125 to Cys-161. Lys-131 and Asp-159 together coordinate an alpha-D-glucoside. Residues 248-381 (IPDVSVAKPH…PEIENPLYYE (134 aa)) form a p domain (Extended arm) region. Repeat copies occupy residues 250-261 (DVSVAKPHDWDD), 267-278 (DPEAVKLSDRDE), 286-297 (HPDGTEPPEWNS), 305-316 (DPNAQKPSWWKE), and 320-330 (GEWIPPMIKNP). 2 4 X approximate repeats regions span residues 250-316 (DVSV…WWKE) and 320-377 (GEWI…IENP). N-linked (GlcNAc...) asparagine glycosylation is present at Asn-296. An intrachain disulfide couples Cys-332 to Cys-338. 3 repeat units span residues 339 to 349 (GQQIPGLINNA), 353 to 363 (GPGELNEIINP), and 367 to 377 (GEWHPPEIENP). Glu-398 contacts an alpha-D-glucoside. N-linked (GlcNAc...) asparagine glycosylation is found at Asn-416 and Asn-425. A helical transmembrane segment spans residues 482-502 (FVLTAAVVLLTTSVLCCVVFT).

Belongs to the calreticulin family. In terms of assembly, interacts with MPD1.

It localises to the endoplasmic reticulum membrane. Functionally, interacts with newly synthesized monoglucosylated glycoproteins in the endoplasmic reticulum. It may act in assisting protein assembly and/or in the retention within the ER of unassembled protein subunits. It seems to play a major role in the quality control apparatus of the ER by the retention of incorrectly folded proteins. The protein is Calnexin homolog (CNE1) of Saccharomyces cerevisiae (strain ATCC 204508 / S288c) (Baker's yeast).